A 118-amino-acid chain; its full sequence is MARIAGVNIPVNKHIVIGLRSIYGVGQTTAQKICADVNIDPTTKVRELTEEQLEALRSEVTKFKIEGDLRRDVTMNIKRLMDMGCYRGIRHRRSLPLRGQRTKNNARTRKGPKKPIKR.

Residues histidine 91–arginine 118 form a disordered region.

It belongs to the universal ribosomal protein uS13 family. Part of the 30S ribosomal subunit. Forms a loose heterodimer with protein S19. Forms two bridges to the 50S subunit in the 70S ribosome.

Its function is as follows. Located at the top of the head of the 30S subunit, it contacts several helices of the 16S rRNA. In the 70S ribosome it contacts the 23S rRNA (bridge B1a) and protein L5 of the 50S subunit (bridge B1b), connecting the 2 subunits; these bridges are implicated in subunit movement. Contacts the tRNAs in the A and P-sites. This is Small ribosomal subunit protein uS13 from Hydrogenovibrio crunogenus (strain DSM 25203 / XCL-2) (Thiomicrospira crunogena).